We begin with the raw amino-acid sequence, 297 residues long: Small ribosomal subunit biogenesis GTPase RsgA (297 aa).

Residues 65–223 (RNELVRPPVA…VADTPGFSAI (159 aa)) enclose the CP-type G domain. GTP-binding positions include 114-117 (TKVD) and 166-174 (GQSGAGKST). Zn(2+)-binding residues include C247, C252, H254, and C260.

Belongs to the TRAFAC class YlqF/YawG GTPase family. RsgA subfamily. Monomer. Associates with 30S ribosomal subunit, binds 16S rRNA. It depends on Zn(2+) as a cofactor.

It localises to the cytoplasm. One of several proteins that assist in the late maturation steps of the functional core of the 30S ribosomal subunit. Helps release RbfA from mature subunits. May play a role in the assembly of ribosomal proteins into the subunit. Circularly permuted GTPase that catalyzes slow GTP hydrolysis, GTPase activity is stimulated by the 30S ribosomal subunit. In Enterococcus faecalis (strain ATCC 700802 / V583), this protein is Small ribosomal subunit biogenesis GTPase RsgA.